A 253-amino-acid chain; its full sequence is Probable transcriptional regulatory protein A1G_04400 (253 aa).

The tract at residues 1 to 21 (MAGHSKFKNIQHRKGAQDKKR) is disordered.

Belongs to the TACO1 family.

Its subcellular location is the cytoplasm. The sequence is that of Probable transcriptional regulatory protein A1G_04400 from Rickettsia rickettsii (strain Sheila Smith).